We begin with the raw amino-acid sequence, 164 residues long: uncharacterized protein (164 aa).

The segment covering 1–17 (MNSRVPATQSWFSSHLP) has biased composition (polar residues). The tract at residues 1-48 (MNSRVPATQSWFSSHLPTTEPDLEPATAAEGSTTETATLSPETTSFND) is disordered. The span at 24 to 45 (EPATAAEGSTTETATLSPETTS) shows a compositional bias: low complexity. The helical transmembrane segment at 64 to 84 (MLLSFGIITVIGLAVAMVLYI) threads the bilayer. Positions 106–130 (TEEQDELEQELLEHGRDAASMQAAA) form a coiled coil.

The protein localises to the membrane. This is an uncharacterized protein from Mus musculus (Mouse).